A 471-amino-acid polypeptide reads, in one-letter code: ATP synthase subunit beta (471 aa).

153 to 160 (GGAGVGKT) serves as a coordination point for ATP.

It belongs to the ATPase alpha/beta chains family. In terms of assembly, F-type ATPases have 2 components, CF(1) - the catalytic core - and CF(0) - the membrane proton channel. CF(1) has five subunits: alpha(3), beta(3), gamma(1), delta(1), epsilon(1). CF(0) has four main subunits: a(1), b(1), b'(1) and c(9-12).

It localises to the cell membrane. The enzyme catalyses ATP + H2O + 4 H(+)(in) = ADP + phosphate + 5 H(+)(out). Its function is as follows. Produces ATP from ADP in the presence of a proton gradient across the membrane. The catalytic sites are hosted primarily by the beta subunits. The sequence is that of ATP synthase subunit beta from Chloroflexus aggregans (strain MD-66 / DSM 9485).